Consider the following 456-residue polypeptide: Riboflavin transporter RibZ (456 aa).

14 helical membrane-spanning segments follow: residues 5 to 25, 45 to 65, 78 to 98, 105 to 125, 134 to 154, 158 to 178, 192 to 212, 220 to 240, 260 to 280, 289 to 309, 321 to 341, 343 to 363, 385 to 405, and 428 to 448; these read WIVL…GSIL, WVVT…GKLG, FFIF…STLI, AVGA…AFPA, ITGA…GIIL, GWPS…FLGI, SFDI…LLAM, LYLG…EVKF, IIGV…PFYL, MMAG…APIA, ILTA…LLKA, SPLY…GAFS, FLAT…SSFF, and QSYW…VFFM.

The protein belongs to the major facilitator superfamily.

It is found in the cell membrane. In terms of biological role, transports riboflavin into the cell. This is Riboflavin transporter RibZ from Clostridioides difficile (strain 630) (Peptoclostridium difficile).